We begin with the raw amino-acid sequence, 393 residues long: Rubredoxin-NAD(+) reductase (393 aa).

FAD is bound by residues 9–12 (SGMA), 33–34 (CA), lysine 42, valine 80, glutamate 162, aspartate 282, valine 294, and lysine 325.

Belongs to the FAD-dependent oxidoreductase family. As to quaternary structure, homodimer. FAD is required as a cofactor.

The protein localises to the cytoplasm. The catalysed reaction is 2 reduced [rubredoxin] + NAD(+) + H(+) = 2 oxidized [rubredoxin] + NADH. It participates in hydrocarbon metabolism; alkane degradation. Involved in the hydrocarbon hydroxylating system, which transfers electrons from NADH to rubredoxin reductase and then through rubredoxin to alkane 1 monooxygenase. The protein is Rubredoxin-NAD(+) reductase (rubB) of Acinetobacter baylyi (strain ATCC 33305 / BD413 / ADP1).